Reading from the N-terminus, the 633-residue chain is Kelch-like protein diablo (633 aa).

The interval 1–62 (MGDLPGSTGG…ARLSHTSEKH (62 aa)) is disordered. The segment covering 7–25 (STGGGGGVGGGGNGGGGPT) has biased composition (gly residues). Over residues 26–45 (IAGTNGNSTTGPGSSTGSTG) the composition is skewed to low complexity. The BTB domain occupies 80–147 (CDVVLNVGGR…CYTAHIIVEE (68 aa)). One can recognise a BACK domain in the interval 182–284 (CLGIRAFADT…SPKFLVGTVG (103 aa)). Kelch repeat units follow at residues 331–377 (VLFA…VLND), 379–425 (LYAV…VLDG), 426–472 (FLYA…VLGG), 474–519 (LYAI…VFNN), 521–566 (IYAV…VVNG), and 567–613 (QLYA…VMRA).

It functions in the pathway protein modification; protein ubiquitination. Its function is as follows. Probable substrate-specific adapter of an E3 ubiquitin-protein ligase complex which mediates the ubiquitination and subsequent proteasomal degradation of target proteins. May have a role in synapse differentiation and growth. This is Kelch-like protein diablo from Drosophila ananassae (Fruit fly).